Here is a 629-residue protein sequence, read N- to C-terminus: Probable potassium transport system protein Kup 3 (629 aa).

12 helical membrane passes run 20 to 40, 54 to 74, 106 to 126, 143 to 163, 171 to 191, 212 to 232, 253 to 273, 291 to 311, 343 to 363, 372 to 392, 400 to 420, and 425 to 445; these read LSLS…LYTF, VTTI…IASV, PFII…GTIT, PSLK…LFAI, IGKA…ILGA, FLFS…LCAT, WFGL…ALVL, FLLP…QAII, IYIG…IIGF, AYGI…FIAL, IITS…FFAA, and FING…MMYI.

This sequence belongs to the HAK/KUP transporter (TC 2.A.72) family.

The protein localises to the cell inner membrane. It catalyses the reaction K(+)(in) + H(+)(in) = K(+)(out) + H(+)(out). Transport of potassium into the cell. Likely operates as a K(+):H(+) symporter. This chain is Probable potassium transport system protein Kup 3, found in Legionella pneumophila (strain Paris).